Here is a 500-residue protein sequence, read N- to C-terminus: Probable cytosol aminopeptidase (500 aa).

Mn(2+) is bound by residues Lys264 and Asp269. Residue Lys276 is part of the active site. Mn(2+) is bound by residues Asp287, Asp346, and Glu348. Arg350 is an active-site residue.

Belongs to the peptidase M17 family. Mn(2+) serves as cofactor.

Its subcellular location is the cytoplasm. The catalysed reaction is Release of an N-terminal amino acid, Xaa-|-Yaa-, in which Xaa is preferably Leu, but may be other amino acids including Pro although not Arg or Lys, and Yaa may be Pro. Amino acid amides and methyl esters are also readily hydrolyzed, but rates on arylamides are exceedingly low.. The enzyme catalyses Release of an N-terminal amino acid, preferentially leucine, but not glutamic or aspartic acids.. Its function is as follows. Presumably involved in the processing and regular turnover of intracellular proteins. Catalyzes the removal of unsubstituted N-terminal amino acids from various peptides. The sequence is that of Probable cytosol aminopeptidase from Chlamydia felis (strain Fe/C-56) (Chlamydophila felis).